A 461-amino-acid chain; its full sequence is Cysteine--tRNA ligase (461 aa).

Position 28 (Cys-28) interacts with Zn(2+). The 'HIGH' region motif lies at 30-40 (ITIYDLCHIGH). Zn(2+) contacts are provided by Cys-209, His-234, and Glu-238. Positions 266 to 270 (KMSKS) match the 'KMSKS' region motif. ATP is bound at residue Lys-269.

Belongs to the class-I aminoacyl-tRNA synthetase family. In terms of assembly, monomer. It depends on Zn(2+) as a cofactor.

The protein localises to the cytoplasm. It catalyses the reaction tRNA(Cys) + L-cysteine + ATP = L-cysteinyl-tRNA(Cys) + AMP + diphosphate. This chain is Cysteine--tRNA ligase, found in Yersinia pseudotuberculosis serotype IB (strain PB1/+).